Here is a 190-residue protein sequence, read N- to C-terminus: HTH-type transcriptional repressor CutR (190 aa).

The HTH deoR-type domain maps to 3–58 (PINRQQHILKWLKEEGSLRISDISARFGVSEMTVYRDVNQLVQSNQVIKTAGGITL). The H-T-H motif DNA-binding region spans 20 to 39 (LRISDISARFGVSEMTVYRD).

It is found in the cytoplasm. Functionally, may act as a negative transcriptional regulator of cutJ/ycnJ in the presence of copper. May use copper as a corepressor. This Bacillus subtilis (strain 168) protein is HTH-type transcriptional repressor CutR.